The primary structure comprises 132 residues: Protein KRTCAP2 homolog (132 aa).

A run of 4 helical transmembrane segments spans residues 1–21, 35–55, 69–89, and 92–109; these read MAVP…LIFS, MATV…LTAV, AKLF…CGMV, and VCAT…YYIN.

The protein belongs to the KRTCAP2 family. In terms of assembly, component of the oligosaccharyltransferase (OST) complex.

It is found in the membrane. Its function is as follows. Subunit of the oligosaccharyl transferase (OST) complex that catalyzes the initial transfer of a defined glycan (Glc(3)Man(9)GlcNAc(2) in eukaryotes) from the lipid carrier dolichol-pyrophosphate to an asparagine residue within an Asn-X-Ser/Thr consensus motif in nascent polypeptide chains, the first step in protein N-glycosylation. N-glycosylation occurs cotranslationally and the complex associates with the Sec61 complex at the channel-forming translocon complex that mediates protein translocation across the endoplasmic reticulum (ER). All subunits are required for a maximal enzyme activity. The sequence is that of Protein KRTCAP2 homolog from Aedes aegypti (Yellowfever mosquito).